The sequence spans 225 residues: F-box protein SKIP27 (225 aa).

The region spanning 121–169 (KSRLECLPQDLLIRVICGVDHEDLKSLKLVSKSIREASLVAKTLHFAYT) is the F-box domain.

As to quaternary structure, part of a SCF (ASK-cullin-F-box) protein ligase complex. Interacts with SKP1A/ASK1 and SPK1B/ASK2.

It is found in the nucleus. Its pathway is protein modification; protein ubiquitination. In terms of biological role, component of SCF(ASK-cullin-F-box) E3 ubiquitin ligase complexes, which may mediate the ubiquitination and subsequent proteasomal degradation of target proteins. This chain is F-box protein SKIP27 (SKIP27), found in Arabidopsis thaliana (Mouse-ear cress).